The chain runs to 1034 residues: Platelet endothelial aggregation receptor 1 (1034 aa).

Positions 1-18 are cleaved as a signal peptide; the sequence is MPLCPLLLLALGLRLTGT. Residues 19-754 are Extracellular-facing; it reads LNSNDPNVCT…PTSPVTHNSL (736 aa). In terms of domain architecture, EMI spans 23–101; it reads DPNVCTFWES…YYESRGACVP (79 aa). 3 disulfides stabilise this stretch: cysteine 27–cysteine 89, cysteine 53–cysteine 63, and cysteine 88–cysteine 99. N-linked (GlcNAc...) asparagine glycosylation occurs at asparagine 150. 5 consecutive EGF-like domains span residues 181 to 215, 223 to 258, 266 to 301, 309 to 344, and 398 to 433; these read YGPACQFDCQCYGASCDPQDGACFCPPGRAGPSCN, DGFFCPRTYPCQNGGVPQGSQGSCSCPPGWMGVICS, HGPNCTQECRCHNGGLCDRFTGQCHCAPGYIGDRCQ, FGQDCAETCDCAPGARCFPANGACLCEHGFTGDRCT, and HGPGCQEHCLCLHGGLCLADSGLCRCAPGYTGPHCA. Cystine bridges form between cysteine 185-cysteine 196, cysteine 189-cysteine 203, cysteine 205-cysteine 214, cysteine 233-cysteine 246, and cysteine 248-cysteine 257. Asparagine 269 carries an N-linked (GlcNAc...) asparagine glycan. 9 cysteine pairs are disulfide-bonded: cysteine 270–cysteine 282, cysteine 276–cysteine 289, cysteine 291–cysteine 300, cysteine 313–cysteine 325, cysteine 319–cysteine 332, cysteine 334–cysteine 343, cysteine 402–cysteine 414, cysteine 408–cysteine 421, and cysteine 423–cysteine 432. N-linked (GlcNAc...) asparagine glycosylation is present at asparagine 474. EGF-like domains are found at residues 484–519, 575–605, 613–648, and 656–691; these read WGFNCNASCQCAHDGVCSPQTGACTCTPGWHGAHCQ, SNTCTCKNGGTCVSENGNCVCAPGFRGPSCQ, YGKRCVQCKCNNNHSSCHPSDGTCSCLAGWTGPDCS, and WGLKCSQLCQCHHGGTCHPQDGSCICTPGWTGPNCL. 12 cysteine pairs are disulfide-bonded: cysteine 488/cysteine 500, cysteine 494/cysteine 507, cysteine 509/cysteine 518, cysteine 578/cysteine 586, cysteine 580/cysteine 593, cysteine 595/cysteine 604, cysteine 617/cysteine 629, cysteine 622/cysteine 636, cysteine 638/cysteine 647, cysteine 660/cysteine 672, cysteine 666/cysteine 679, and cysteine 681/cysteine 690. A helical membrane pass occupies residues 755–775; that stretch reads GAVIGIAVLGTLVVALIALFI. Residues 776-1034 lie on the Cytoplasmic side of the membrane; that stretch reads GYRQWQKGKE…PSPPSRRQDR (259 aa). Residues 823–883 form a disordered region; it reads TLSQCSPNPP…PHERGASHLD (61 aa). Basic and acidic residues predominate over residues 851-883; it reads RPSRAHGRENHVTLPADWKHRREPHERGASHLD. Position 923 is a phosphotyrosine (tyrosine 923). Positions 925–1034 are disordered; that stretch reads TIRDLPSLPG…PSPPSRRQDR (110 aa). Position 951 is a phosphoserine (serine 951). Residues 972–991 are compositionally biased toward polar residues; that stretch reads DSGTYEQPSPLSHNEESLGS. At serine 1026 the chain carries Phosphoserine.

It belongs to the MEGF family. In terms of assembly, interacts with SHC2 upon its aggregation-induced tyrosine phosphorylation. Interacts (via extracellular domain) with SVEP1. Post-translationally, phosphorylated in the intracellular domain on tyrosine residues. Phosphorylated on tyrosine residues by SRC. Tyrosine phosphorylation is detected upon platelet aggregation stimulated by collagen, TRAP and thrombin and platelet-platelet contacts but not after platelet activation. Tyrosine phosphorylation enhanced its association with SHC1 and SHC2. Phosphorylated in the intracellular domain on tyrosine residues. Phosphorylated when in the presence of SVEP1. Expressed in thymocytes, bone marrow stromal and osteogenic cells (at protein level). Strongly expressed in kidney and heart. Moderately expressed in lung, spleen, thymus, liver, brain, testis, skin and stomach. Expressed in hematopoietic stem progenitor cells.

It is found in the cell membrane. Its subcellular location is the cell projection. The protein localises to the lamellipodium. Its function is as follows. Required for SVEP1-mediated platelet activation, via its interaction with SVEP1 and subsequent activation of AKT/mTOR signaling. May be involved in the early stages of hematopoiesis. The chain is Platelet endothelial aggregation receptor 1 (Pear1) from Mus musculus (Mouse).